An 828-amino-acid polypeptide reads, in one-letter code: ADP-ribosylation factor GTPase-activating protein AGD1 (828 aa).

One can recognise a BAR domain in the interval 1–225 (MHFAKLDDSP…INQVLAYAHQ (225 aa)). Positions 225 to 255 (QSRECANYEMASLNERMQEYQRQVDRETRNS) form a coiled coil. The segment at 247–268 (QVDRETRNSCVSPTGDGMRHNS) is disordered. In terms of domain architecture, PH spans 288–425 (QTIRQGYLSK…WIEKITGVIA (138 aa)). Ser-441 carries the post-translational modification Phosphoserine. An Arf-GAP domain is found at 498–643 (EKPIDVLTRV…IFVRKAIDSQ (146 aa)). A C4-type zinc finger spans residues 513-536 (CADCGAPEPDWASLNLGVLICIEC). The segment covering 590–600 (TSSASRSSGTP) has biased composition (low complexity). Residues 590–611 (TSSASRSSGTPKSDRPRKLLVR) are disordered. ANK repeat units follow at residues 735–764 (NDCSLLHLACLSADIGMVELLLQYGAKINA) and 768–797 (KGRTPLHHCIISRRYAIARLLLMRGGDPNA).

As to expression, expressed in roots, but not in hypocotyls or cotyledons. Low levels detected in leaf and shoot apical meristems and in siliques.

The protein resides in the endosome. Functionally, probable GTPase-activating protein. Regulator of membrane trafficking. Required for maintaining a straight growth of root hairs. This is ADP-ribosylation factor GTPase-activating protein AGD1 (AGD1) from Arabidopsis thaliana (Mouse-ear cress).